Reading from the N-terminus, the 147-residue chain is Insertion element IS402 uncharacterized 16.2 kDa protein (147 aa).

A disordered region spans residues 106–147 (DSSSIRAVGAGQKLGQTPPIARDPVPSTTSSPTPTVRRSPRS). Residues 129–147 (PVPSTTSSPTPTVRRSPRS) are compositionally biased toward low complexity.

It belongs to the transposase 6 family.

This chain is Insertion element IS402 uncharacterized 16.2 kDa protein, found in Burkholderia cepacia (Pseudomonas cepacia).